Consider the following 268-residue polypeptide: Ribosomal RNA small subunit methyltransferase A (268 aa).

6 residues coordinate S-adenosyl-L-methionine: Asn18, Leu20, Gly45, Glu66, Asp91, and Asn112.

Belongs to the class I-like SAM-binding methyltransferase superfamily. rRNA adenine N(6)-methyltransferase family. RsmA subfamily.

Its subcellular location is the cytoplasm. It carries out the reaction adenosine(1518)/adenosine(1519) in 16S rRNA + 4 S-adenosyl-L-methionine = N(6)-dimethyladenosine(1518)/N(6)-dimethyladenosine(1519) in 16S rRNA + 4 S-adenosyl-L-homocysteine + 4 H(+). In terms of biological role, specifically dimethylates two adjacent adenosines (A1518 and A1519) in the loop of a conserved hairpin near the 3'-end of 16S rRNA in the 30S particle. May play a critical role in biogenesis of 30S subunits. The chain is Ribosomal RNA small subunit methyltransferase A from Vibrio vulnificus (strain CMCP6).